Here is a 147-residue protein sequence, read N- to C-terminus: Heavy metal-dependent transcription regulator 1 (147 aa).

Residues 1–70 (MNIGQASKVV…VEQIKDLLAL (70 aa)) form the HTH merR-type domain. A DNA-binding region (H-T-H motif) is located at residues 3-22 (IGQASKVVSGVSSKMIRYYE).

The protein localises to the cytoplasm. Functionally, transcriptional regulator involved in acid tolerance. Binds copper. The chain is Heavy metal-dependent transcription regulator 1 (hmrR1) from Rhizobium meliloti (strain 1021) (Ensifer meliloti).